Consider the following 921-residue polypeptide: TRPM8 channel-associated factor 1 (921 aa).

Residues 542-841 (YCWMSTGLYI…TYLQLQEAFG (300 aa)) enclose the Peptidase M60 domain.

It belongs to the TCAF family. As to quaternary structure, interacts with TRPM8 (via N-terminus and C-terminus domains); the interaction inhibits TRPM8 channel activity. Interacts with TRPV6. In terms of tissue distribution, isoform 2 is expressed in the prostate and strongly expressed in cancerous prostate samples.

It localises to the cell membrane. Positively regulates the plasma membrane cation channel TRPM8 activity. Involved in the recruitment of TRPM8 to the cell surface. Promotes prostate cancer cell migration inhibition in a TRPM8-dependent manner. This chain is TRPM8 channel-associated factor 1, found in Homo sapiens (Human).